The following is a 199-amino-acid chain: Pre T-cell antigen receptor alpha (199 aa).

Positions 1–16 are cleaved as a signal peptide; that stretch reads MARTWLLLLLGVRCQA. Topologically, residues 17–146 are extracellular; sequence LPSGIAGTPF…PEPLGGTQRQ (130 aa). A disulfide bond links Cys47 and Cys107. Asn67 and Asn117 each carry an N-linked (GlcNAc...) asparagine glycan. The chain crosses the membrane as a helical span at residues 147–167; the sequence is VLWLSLLRLLLFKLLLLDVLL. The Cytoplasmic segment spans residues 168–199; that stretch reads TCSHLRLHVLAGQHLQPPPSRKSLPPTHRIWT.

As to quaternary structure, heterodimer with TCRB; disulfide linked. This heterodimer assembles with CD3 proteins into a signaling-competent pre-T-cell receptor complex. Interacts with RHBDD1. As to expression, isoform 1 is expressed at higher levels than isoform 2 in the thymus while only isoform 2 is expressed in polyclonal beta-only cells. Isoform 1 shows a predominant expression in immature thymocytes.

The protein localises to the membrane. It is found in the cell membrane. In terms of biological role, component of the pre-T-cell receptor complex (composed of PTCRA, TCRB and the CD3 complex) that plays a crucial role in early T-cell development, particularly alpha-beta T cell differentiation. Isoform 1 acts to retain most TCRB intracellularly, while isoform 2 permits higher levels of cell surface TCRB expression and facilitates signaling from the CD3-TCRB complex. In Mus musculus (Mouse), this protein is Pre T-cell antigen receptor alpha.